A 247-amino-acid polypeptide reads, in one-letter code: Triosephosphate isomerase (247 aa).

Substrate contacts are provided by asparagine 10 and lysine 12. Histidine 95 serves as the catalytic Electrophile. Catalysis depends on glutamate 165, which acts as the Proton acceptor.

The protein belongs to the triosephosphate isomerase family. In terms of assembly, homodimer.

It carries out the reaction D-glyceraldehyde 3-phosphate = dihydroxyacetone phosphate. Its pathway is carbohydrate biosynthesis; gluconeogenesis. The protein operates within carbohydrate degradation; glycolysis; D-glyceraldehyde 3-phosphate from glycerone phosphate: step 1/1. The polypeptide is Triosephosphate isomerase (TPI1) (Yarrowia lipolytica (strain CLIB 122 / E 150) (Yeast)).